Reading from the N-terminus, the 246-residue chain is Phosducin (246 aa).

The span at 1 to 14 (MEEAASQSLEEDFE) shows a compositional bias: acidic residues. A disordered region spans residues 1–70 (MEEAASQSLE…DKDSKERMSR (70 aa)). A Phosducin domain is found at 1 to 246 (MEEAASQSLE…QTNTEDEDIE (246 aa)). The segment covering 58–69 (SRDDKDSKERMS) has biased composition (basic and acidic residues). Phosphoserine; by PKA is present on serine 73. The thioredoxin fold stretch occupies residues 111-246 (YGFVYELETG…QTNTEDEDIE (136 aa)).

It belongs to the phosducin family. Interacts with CRX. Forms a complex with the beta and gamma subunits of the GTP-binding protein, transducin. Post-translationally, light-induced changes in cyclic nucleotide levels modulate the phosphorylation of this protein by cAMP kinase.

It is found in the cytoplasm. It localises to the cytosol. The protein resides in the nucleus. The protein localises to the cell projection. Its subcellular location is the cilium. It is found in the photoreceptor outer segment. It localises to the photoreceptor inner segment. Its function is as follows. Inhibits the transcriptional activation activity of the cone-rod homeobox CRX. May participate in the regulation of visual phototransduction or in the integration of photoreceptor metabolism. The polypeptide is Phosducin (Pdc) (Rattus norvegicus (Rat)).